The primary structure comprises 2090 residues: Nuclear pore complex protein Nup214 (2090 aa).

Glycine 2 is subject to N-acetylglycine. Phosphoserine is present on serine 30. Blade repeat units lie at residues 41-93, 94-150, 151-193, 194-239, 240-303, 304-359, and 360-404; these read LLAV…PMKF, PIHH…DAGG, MVID…PSTV, AVTS…ESDH, PVRV…ERQH, HYYL…KSDD, and SLPM…FYMI. The tract at residues 41–404 is seven-bladed beta propeller; that stretch reads LLAVSNKYGL…DGVLCPFYMI (364 aa). The 44 X 2 AA repeats of F-G stretch occupies residues 236–1418; that stretch reads ESDHPVRVLD…AVFGSLPVTS (1183 aa). Residue threonine 416 is modified to Phosphothreonine. Serine 421, serine 430, and serine 433 each carry phosphoserine. The disordered stretch occupies residues 422 to 460; it reads LEGERQPKSPGSTPTTPTSSQAPQKLDASAAAAPASLPP. The segment covering 429-441 has biased composition (low complexity); sequence KSPGSTPTTPTSS. 3 positions are modified to phosphothreonine: threonine 434, threonine 437, and threonine 439. Positions 450-586 are (Microbial infection) Binds human adenovirus 5 (HAdV-5) protein L3 (hexon); it reads SAAAAPASLP…PPSTSAVKVN (137 aa). The interval 481 to 2076 is 11 X 5 AA approximate repeats; that stretch reads VFSFGSSSLK…GSGTGGFSFG (1596 aa). Residues 484 to 485 form repeat 1; it reads FG. Composition is skewed to low complexity over residues 489-513 and 524-536; these read LKSS…KAAP and PPSK…TPAA. A disordered region spans residues 489–536; the sequence is LKSSATVTGEPPSYSSGSDSSKAAPGPGPSTFSFVPPSKASLAPTPAA. The stretch at 548 to 549 is repeat 2; it reads FG. 2 stretches are compositionally biased toward low complexity: residues 597–629 and 637–658; these read STPV…HPTP and VPLK…SSSP. The segment at 597–700 is disordered; the sequence is STPVSSSQSA…KQGHQWKDSD (104 aa). Residues serine 651, serine 657, and serine 666 each carry the phosphoserine modification. At threonine 670 the chain carries Phosphothreonine. Position 678 is a phosphoserine (serine 678). The stretch at 680 to 1209 forms a coiled coil; the sequence is QAKSLQPAVA…VTSTPSASGQ (530 aa). The segment covering 691-700 has biased composition (basic and acidic residues); it reads KQGHQWKDSD. Leucine-zipper stretches follow at residues 740–768 and 861–882; these read LRTE…ISSL and LANN…VDSL. Serine 760 carries the post-translational modification Phosphoserine. 4 positions are modified to phosphoserine: serine 940, serine 970, serine 974, and serine 989. A disordered region spans residues 987 to 1009; the sequence is TSSVSQSLESEDARTSCKDDEAV. The segment covering 997 to 1007 has biased composition (basic and acidic residues); it reads EDARTSCKDDE. The residue at position 1021 (threonine 1021) is a Phosphothreonine. 4 positions are modified to phosphoserine: serine 1023, serine 1045, serine 1056, and serine 1081. Over residues 1128-1149 the composition is skewed to polar residues; it reads LKNNPATPSTAMGSSVPYSTAK. The tract at residues 1128–1152 is disordered; the sequence is LKNNPATPSTAMGSSVPYSTAKTPH. Phosphothreonine is present on residues threonine 1134, threonine 1150, and threonine 1156. Polar residues-rich tracts occupy residues 1168–1188 and 1199–1213; these read LINS…SSGD and AVTS…FSKP. The segment at 1168 to 1213 is disordered; sequence LINSLKPSGPTPASGQLSSGDKASGTAKIETAVTSTPSASGQFSKP. Phosphoserine is present on serine 1181. Repeat unit 3 spans residues 1225–1226; that stretch reads FG. Polar residues-rich tracts occupy residues 1234-1254 and 1273-1285; these read SNFT…QPDA and PPSG…NTTP. Disordered stretches follow at residues 1234-1316 and 1337-1408; these read SNFT…PPSK and LRVG…TSST. The segment covering 1288 to 1299 has biased composition (low complexity); that stretch reads PAASSSRPVAPS. A compositionally biased stretch (polar residues) spans 1301-1310; that stretch reads TALSTTSSKL. Threonine 1312 carries the phosphothreonine modification. The segment covering 1347-1368 has biased composition (polar residues); the sequence is KPTNKASSTSLTSTQPTKTSGV. Serine 1353 carries the phosphoserine modification. Low complexity predominate over residues 1386 to 1408; the sequence is PPVTSSATTTSVAPPAATSTSST. Positions 1409 to 2084 are 18 X 4 AA approximate repeats; it reads AVFGSLPVTS…FGSNNSSVQG (676 aa). 4 repeat units span residues 1411–1412, 1427–1428, 1441–1442, and 1473–1474. The 11 X 3 AA approximate repeats stretch occupies residues 1427–2085; sequence FGGTSLSAGK…GSNNSSVQGF (659 aa). Over residues 1438 to 1450 the composition is skewed to polar residues; the sequence is SFSFGSQQTNSTV. Residues 1438–1467 are disordered; sequence SFSFGSQQTNSTVPPSAPPPTTAATPLPTS. Low complexity-rich tracts occupy residues 1479–1489 and 1508–1527; these read SATTPSLPMSA and SEVS…AQLP. Positions 1479 to 1539 are disordered; sequence SATTPSLPMS…PPQTSDSVKK (61 aa). A Glycyl lysine isopeptide (Lys-Gly) (interchain with G-Cter in SUMO2) cross-link involves residue lysine 1538. Tandem repeats lie at residues 1635 to 1636, 1674 to 1675, 1686 to 1687, 1713 to 1714, 1721 to 1722, 1726 to 1727, 1732 to 1733, 1756 to 1757, 1772 to 1773, 1786 to 1787, 1798 to 1799, 1806 to 1807, 1812 to 1813, 1819 to 1820, 1842 to 1843, 1851 to 1852, 1862 to 1863, and 1874 to 1875. Residues 1884-1903 are disordered; the sequence is GFFSGLGGKPSQDAANKNPF. Tandem repeats lie at residues 1910–1911, 1922–1923, 1930–1931, 1938–1939, and 1959–1960. At serine 1963 the chain carries Phosphoserine. A run of 3 repeats spans residues 1970–1971, 1976–1977, and 1982–1983. At serine 1985 the chain carries Phosphoserine. 11 tandem repeats follow at residues 1988–1989, 1994–1995, 2012–2013, 2024–2025, 2026–2027, 2035–2036, 2046–2047, 2056–2057, 2066–2067, 2075–2076, and 2085–2086.

Homodimer. Part of the nuclear pore complex (NPC). Interacts with NUP88. Interacts with ZFP36; this interaction increases upon lipopolysaccharide (LPS) stimulation. Interacts with DDX19. Interacts with XPO1. Interacts with XPO5. As to quaternary structure, (Microbial infection) Interacts with human herpes virus 1 (HHV-1) protein UL25; this interaction might be essential to the capsid docking onto the host nuclear pore. In terms of assembly, (Microbial infection) Interacts (via N-terminus) with human adenovirus 5 (HAdV-5) protein L3 (hexon); this interaction might be essential for the release of the virus genome to the nucleus. Probably glycosylated as it reacts with wheat germ agglutinin (WGA). In terms of tissue distribution, expressed in thymus, spleen, bone marrow, kidney, brain and testis, but hardly in all other tissues or in whole embryos during development.

Its subcellular location is the nucleus. It localises to the nuclear pore complex. In terms of biological role, part of the nuclear pore complex. Has a critical role in nucleocytoplasmic transport. May serve as a docking site in the receptor-mediated import of substrates across the nuclear pore complex. (Microbial infection) Required for capsid disassembly of the human adenovirus 5 (HadV-5) leading to release of the viral genome to the nucleus (in vitro). This Homo sapiens (Human) protein is Nuclear pore complex protein Nup214 (NUP214).